The sequence spans 1400 residues: Tiny macrocysts protein C (1400 aa).

Helical transmembrane passes span 59-79, 112-132, 152-172, 196-216, 240-260, 266-286, 296-316, and 320-340; these read ILTI…GFKQ, IFFW…WYVA, FVST…LIGL, ANLS…IVGF, FDVY…LVDF, SIVY…ILPY, SGFY…MGIN, and TATT…IGYF. Disordered stretches follow at residues 367–393 and 683–712; these read FNEI…SKVT and ERSG…RGKY. Residues 369-386 are compositionally biased toward basic and acidic residues; it reads EITKNEKSKTGDSKEKES. 4 helical membrane-spanning segments follow: residues 726 to 746, 975 to 995, 1162 to 1182, and 1342 to 1362; these read WLMI…LIVL, TMLY…AVLF, VLAI…TYSV, and VLTS…LLLF.

It is found in the membrane. The sequence is that of Tiny macrocysts protein C (tmcC) from Dictyostelium discoideum (Social amoeba).